The primary structure comprises 461 residues: MSQSDTIAAIATARGRAALAVVRTSGPAAIEIVDRCFRGDALTDADSHTAHVGVLTDEAGTDIDQVVATVFRAPNSATGEHVVEVSCHGGDLAPKMALQSLLDHGARMAEPGEFTERAFLNGKMDLAQAEAVADLIDATSTKAHQASLTHLKGRYSDLLGDLREELLNLCSLVELEIDFSDEDVEFADRERLEDLLDETEEILGDLLDTYPTGEKLKDGVQVVIGGRPNAGKSTLLNALVGHDRAIVSETPGTTRDEIEAEAEIEGVLFRFVDTAGLRDTADEIEAEGVRRATESIEEADVLFYLYDLTVGLDSQEIAFLQDLADDGSDVQPVVIGNKADRAPDLPVATLDGLTSLKLSALEAREDADEVQPLLDHLTDTVAEHLSRAEASPVVMNQRHRQHLRDALDAVQQAREALDAGVSGDMLTLDLRAALQELGAITGEITNEDVLDQIFSRFCIGK.

3 residues coordinate (6S)-5-formyl-5,6,7,8-tetrahydrofolate: R23, E84, and K123. The 164-residue stretch at 219–382 (GVQVVIGGRP…LLDHLTDTVA (164 aa)) folds into the TrmE-type G domain. Residues 229–234 (NAGKST), 248–254 (SETPGTT), 273–276 (DTAG), and 337–340 (NKAD) each bind GTP. The Mg(2+) site is built by S233 and T254. K461 contributes to the (6S)-5-formyl-5,6,7,8-tetrahydrofolate binding site.

Belongs to the TRAFAC class TrmE-Era-EngA-EngB-Septin-like GTPase superfamily. TrmE GTPase family. Homodimer. Heterotetramer of two MnmE and two MnmG subunits. K(+) is required as a cofactor.

It is found in the cytoplasm. Functionally, exhibits a very high intrinsic GTPase hydrolysis rate. Involved in the addition of a carboxymethylaminomethyl (cmnm) group at the wobble position (U34) of certain tRNAs, forming tRNA-cmnm(5)s(2)U34. The sequence is that of tRNA modification GTPase MnmE from Salinibacter ruber (strain DSM 13855 / M31).